Reading from the N-terminus, the 229-residue chain is MTKKKTFIPLLYLTSIVFLPWCISFTFKKSLESWFIDWWNTRQSEIFLNDIKEKSILKKFIEFEELFFLDDMLKECPETHLQNLRTGIYKETIQLIKTHNEDRMNTILHFSTNIICFFILSGYSILGNQELVLINSLVREFIYNLSDTIKAFSILLLTDLCIGFHSTHGWELVIGFVYKDFGFAQNDQIISGLVSTFPVILDTILKYWIFRYLNRVSPSLVVIYHSMND.

The next 4 helical transmembrane spans lie at 7–27, 107–127, 154–174, and 189–209; these read FIPL…SFTF, ILHF…SILG, ILLL…ELVI, and IISG…KYWI.

The protein belongs to the CemA family.

It localises to the plastid. It is found in the chloroplast inner membrane. It carries out the reaction K(+)(in) + H(+)(out) = K(+)(out) + H(+)(in). In terms of biological role, contributes to K(+)/H(+) antiport activity by supporting proton efflux to control proton extrusion and homeostasis in chloroplasts in a light-dependent manner to modulate photosynthesis. Prevents excessive induction of non-photochemical quenching (NPQ) under continuous-light conditions. Indirectly promotes efficient inorganic carbon uptake into chloroplasts. This is Potassium/proton antiporter CemA from Glycine max (Soybean).